Here is a 353-residue protein sequence, read N- to C-terminus: UDP-N-acetylglucosamine--N-acetylmuramyl-(pentapeptide) pyrophosphoryl-undecaprenol N-acetylglucosamine transferase (353 aa).

UDP-N-acetyl-alpha-D-glucosamine is bound by residues 10–12 (TGG), N124, S183, and Q283.

Belongs to the glycosyltransferase 28 family. MurG subfamily.

It is found in the cell inner membrane. It carries out the reaction di-trans,octa-cis-undecaprenyl diphospho-N-acetyl-alpha-D-muramoyl-L-alanyl-D-glutamyl-meso-2,6-diaminopimeloyl-D-alanyl-D-alanine + UDP-N-acetyl-alpha-D-glucosamine = di-trans,octa-cis-undecaprenyl diphospho-[N-acetyl-alpha-D-glucosaminyl-(1-&gt;4)]-N-acetyl-alpha-D-muramoyl-L-alanyl-D-glutamyl-meso-2,6-diaminopimeloyl-D-alanyl-D-alanine + UDP + H(+). It functions in the pathway cell wall biogenesis; peptidoglycan biosynthesis. In terms of biological role, cell wall formation. Catalyzes the transfer of a GlcNAc subunit on undecaprenyl-pyrophosphoryl-MurNAc-pentapeptide (lipid intermediate I) to form undecaprenyl-pyrophosphoryl-MurNAc-(pentapeptide)GlcNAc (lipid intermediate II). The protein is UDP-N-acetylglucosamine--N-acetylmuramyl-(pentapeptide) pyrophosphoryl-undecaprenol N-acetylglucosamine transferase of Helicobacter pylori (strain G27).